The chain runs to 312 residues: Glyoxylate/hydroxypyruvate reductase A (312 aa).

Arg227 is a catalytic residue. Residue His275 is the Proton donor of the active site.

This sequence belongs to the D-isomer specific 2-hydroxyacid dehydrogenase family. GhrA subfamily.

It localises to the cytoplasm. The catalysed reaction is glycolate + NADP(+) = glyoxylate + NADPH + H(+). It catalyses the reaction (R)-glycerate + NAD(+) = 3-hydroxypyruvate + NADH + H(+). It carries out the reaction (R)-glycerate + NADP(+) = 3-hydroxypyruvate + NADPH + H(+). Catalyzes the NADPH-dependent reduction of glyoxylate and hydroxypyruvate into glycolate and glycerate, respectively. This chain is Glyoxylate/hydroxypyruvate reductase A, found in Escherichia coli (strain 55989 / EAEC).